A 753-amino-acid chain; its full sequence is MAP/microtubule affinity-regulating kinase 3 (753 aa).

Positions 1–36 (MSTRTPLPTVNERDTENHTSHGDGRQEVTSRTSRSG) are disordered. Residues 11–28 (NERDTENHTSHGDGRQEV) show a composition bias toward basic and acidic residues. Residue Ser42 is modified to Phosphoserine. Positions 56–307 (YRLLKTIGKG…LEQIMKDRWI (252 aa)) constitute a Protein kinase domain. ATP is bound by residues 62 to 70 (IGKGNFAKV) and Lys85. Asp178 functions as the Proton acceptor in the catalytic mechanism. The residue at position 211 (Thr211) is a Phosphothreonine; by LKB1. One can recognise a UBA domain in the interval 326 to 365 (ISDQKRIDIMVGMGYSQEEIQESLSKMKYDEITATYLLLG). Phosphoserine occurs at positions 368, 374, 376, 380, 383, 384, 400, 407, 419, and 469. A disordered region spans residues 370 to 600 (ELDASDSSSS…TPLSQTRSRG (231 aa)). A compositionally biased stretch (low complexity) spans 374–385 (SDSSSSSNLSLA). Polar residues predominate over residues 391 to 400 (SDLNNSTGQS). Polar residues-rich tracts occupy residues 490 to 513 (STVP…CSER) and 521 to 548 (VIQN…SSAA). Phosphoserine is present on residues Ser540 and Ser543. Thr549 carries the phosphothreonine modification. Thr564 is modified (phosphothreonine; by PKC/PRKCZ). A phosphoserine mark is found at Ser583, Ser598, Ser601, and Ser643. Positions 584–600 (PSLSHEATPLSQTRSRG) are enriched in polar residues. Residues 632 to 655 (NGRYEGSSRNVSAEQKDENKEAKP) are disordered. The segment covering 645–655 (EQKDENKEAKP) has biased composition (basic and acidic residues). In terms of domain architecture, KA1 spans 704 to 753 (DGHAENLVQWEMEVCKLPRLSLNGVRFKRISGTSIAFKNIASKIANELKL).

This sequence belongs to the protein kinase superfamily. CAMK Ser/Thr protein kinase family. SNF1 subfamily. In terms of assembly, interacts with MAPT/TAU. Interacts with DLG5 (via coiled-coil domain). Interacts with STK3/MST2 and STK4/MST1 in the presence of DLG5. Interacts with YWHAB, YWHAG, YWHAQ and YWHAZ. Interacts with PKP2 (via N-terminus). Interacts with CDC25C. Interacts with KSR1. Phosphorylated at Thr-211 by STK11/LKB1 in complex with STE20-related adapter-alpha (STRADA) pseudo kinase and CAB39. Phosphorylation at Thr-564 by PRKCZ/aPKC inhibits the kinase activity. Ubiquitous.

It localises to the cell membrane. The protein resides in the cell projection. It is found in the dendrite. The protein localises to the cytoplasm. It catalyses the reaction L-seryl-[protein] + ATP = O-phospho-L-seryl-[protein] + ADP + H(+). It carries out the reaction L-threonyl-[protein] + ATP = O-phospho-L-threonyl-[protein] + ADP + H(+). With respect to regulation, activated by phosphorylation on Thr-211. Inhibited by phosphorylation on Thr-564. Functionally, serine/threonine-protein kinase. Involved in the specific phosphorylation of microtubule-associated proteins for MAP2 and MAP4. Phosphorylates the microtubule-associated protein MAPT/TAU. Phosphorylates CDC25C on 'Ser-216'. Regulates localization and activity of some histone deacetylases by mediating phosphorylation of HDAC7, promoting subsequent interaction between HDAC7 and 14-3-3 and export from the nucleus. Regulates localization and activity of MITF by mediating its phosphorylation, promoting subsequent interaction between MITF and 14-3-3 and retention in the cytosol. Negatively regulates the Hippo signaling pathway and antagonizes the phosphorylation of LATS1. Cooperates with DLG5 to inhibit the kinase activity of STK3/MST2 toward LATS1. Phosphorylates PKP2 and KSR1. In Homo sapiens (Human), this protein is MAP/microtubule affinity-regulating kinase 3 (MARK3).